The chain runs to 289 residues: MRKFTAFACGTGAGLLTFYLTKLNEPKAAVHNSWTRSEKPVDPCALWDHNWDLRDPKSLVKPVKNDLSQEQNRYNTELEKVVPKHARHIILIRHGEYLDVGDTDETHHLTERGREQAKYTGKRLCELGIKWDKVIASTMVRAQETADIILNEIDYEKTKVKNCAFLREGAPIPPQPPVGHWKPEASQFFRDGARIEAAFRRYFYRAYPDQTKDSYTLLVGHGNVIRYFVCRALQFPPEAWLRISINHASITWLTISPSGNVSIKYLGDTGFMPVNHLTNRIPRAAKNVV.

A helical transmembrane segment spans residues 7-23; it reads FACGTGAGLLTFYLTKL.

It belongs to the phosphoglycerate mutase family. BPG-dependent PGAM subfamily. Interacts with Pk92B/ASK1.

It localises to the mitochondrion outer membrane. It carries out the reaction O-phospho-L-seryl-[protein] + H2O = L-seryl-[protein] + phosphate. The catalysed reaction is O-phospho-L-threonyl-[protein] + H2O = L-threonyl-[protein] + phosphate. Functionally, displays phosphatase activity for serine/threonine residues, and dephosphorylates and activates Pk92B kinase. Has apparently no phosphoglycerate mutase activity. In Drosophila persimilis (Fruit fly), this protein is Serine/threonine-protein phosphatase Pgam5, mitochondrial.